Consider the following 368-residue polypeptide: Cytochrome P450 119 (368 aa).

Heme is bound by residues His76, Arg80, Thr257, Arg259, His315, and Cys317.

It belongs to the cytochrome P450 family. Requires heme as cofactor.

It localises to the cytoplasm. It carries out the reaction 2 a phenolic donor + H2O2 = 2 a phenolic radical donor + 2 H2O. Functionally, the endogenous substrate is not known. In vitro, catalyzes the H(2)O(2)-dependent epoxidation of styrene, cis-beta-methylstyrene, and cis-stilbene with retention of stereochemistry. Is able to use cumene hydroperoxide (CHP) or tert-butyl hydroperoxide (TBHP) instead of H(2)O(2) as the electron acceptor. Can also hydroxylate fatty acids such as lauric acid. This Sulfolobus acidocaldarius (strain ATCC 33909 / DSM 639 / JCM 8929 / NBRC 15157 / NCIMB 11770) protein is Cytochrome P450 119 (cyp119).